The primary structure comprises 310 residues: L-lactate dehydrogenase (310 aa).

Residues valine 11, aspartate 32, tyrosine 62, and 76–77 (GV) contribute to the NAD(+) site. Residues glutamine 79, arginine 85, and 117-120 (NPVD) contribute to the substrate site. Residues 115–117 (ASN) and serine 140 contribute to the NAD(+) site. 145 to 148 (DTAR) provides a ligand contact to substrate. Beta-D-fructose 1,6-bisphosphate contacts are provided by arginine 150 and histidine 165. Histidine 172 serves as the catalytic Proton acceptor. Threonine 227 lines the substrate pocket.

This sequence belongs to the LDH/MDH superfamily. LDH family. Homotetramer.

The protein localises to the cytoplasm. The enzyme catalyses (S)-lactate + NAD(+) = pyruvate + NADH + H(+). It participates in fermentation; pyruvate fermentation to lactate; (S)-lactate from pyruvate: step 1/1. With respect to regulation, allosterically activated by fructose 1,6-bisphosphate (FBP). Its function is as follows. Catalyzes the conversion of lactate to pyruvate. The polypeptide is L-lactate dehydrogenase (Allorhizobium ampelinum (strain ATCC BAA-846 / DSM 112012 / S4) (Agrobacterium vitis (strain S4))).